A 157-amino-acid chain; its full sequence is Endoribonuclease YbeY (157 aa).

Positions 114, 118, and 124 each coordinate Zn(2+).

This sequence belongs to the endoribonuclease YbeY family. Requires Zn(2+) as cofactor.

Its subcellular location is the cytoplasm. In terms of biological role, single strand-specific metallo-endoribonuclease involved in late-stage 70S ribosome quality control and in maturation of the 3' terminus of the 16S rRNA. This Salmonella agona (strain SL483) protein is Endoribonuclease YbeY.